Here is a 67-residue protein sequence, read N- to C-terminus: Small ribosomal subunit protein eS17 (67 aa).

This sequence belongs to the eukaryotic ribosomal protein eS17 family. As to quaternary structure, part of the 30S ribosomal subunit.

In Pyrococcus furiosus (strain ATCC 43587 / DSM 3638 / JCM 8422 / Vc1), this protein is Small ribosomal subunit protein eS17.